A 390-amino-acid polypeptide reads, in one-letter code: Chaperone protein DnaJ (390 aa).

Residues 6–70 (DYYEILGVPR…QKRAQYDQFG (65 aa)) form the J domain. The segment at 146-228 (GSEKEIYVTR…CHGTGKVRRK (83 aa)) adopts a CR-type zinc-finger fold. Cys-159, Cys-162, Cys-176, Cys-179, Cys-202, Cys-205, Cys-216, and Cys-219 together coordinate Zn(2+). CXXCXGXG motif repeat units lie at residues 159–166 (CPTCKGKG), 176–183 (CDMCNGTG), 202–209 (CPKCHGTG), and 216–223 (CHECHGTG).

The protein belongs to the DnaJ family. In terms of assembly, homodimer. Zn(2+) serves as cofactor.

Its subcellular location is the cytoplasm. In terms of biological role, participates actively in the response to hyperosmotic and heat shock by preventing the aggregation of stress-denatured proteins and by disaggregating proteins, also in an autonomous, DnaK-independent fashion. Unfolded proteins bind initially to DnaJ; upon interaction with the DnaJ-bound protein, DnaK hydrolyzes its bound ATP, resulting in the formation of a stable complex. GrpE releases ADP from DnaK; ATP binding to DnaK triggers the release of the substrate protein, thus completing the reaction cycle. Several rounds of ATP-dependent interactions between DnaJ, DnaK and GrpE are required for fully efficient folding. Also involved, together with DnaK and GrpE, in the DNA replication of plasmids through activation of initiation proteins. This is Chaperone protein DnaJ from Dictyoglomus thermophilum (strain ATCC 35947 / DSM 3960 / H-6-12).